Reading from the N-terminus, the 124-residue chain is p53-regulated apoptosis-inducing protein 1 (124 aa).

Positions 1–16 (MGSSSEASFRSAQASC) are enriched in polar residues. The disordered stretch occupies residues 1–46 (MGSSSEASFRSAQASCSGARRQGLGRGDQNLSVMPPNGRAQTHTPG).

In terms of tissue distribution, only found to be expressed in thymus.

Its subcellular location is the mitochondrion. Its function is as follows. May play an important role in mediating p53/TP53-dependent apoptosis. This chain is p53-regulated apoptosis-inducing protein 1 (TP53AIP1), found in Homo sapiens (Human).